The sequence spans 1481 residues: Cystic fibrosis transmembrane conductance regulator (1481 aa).

At 1–77 (MQRSPLEKAS…KLINALRRCF (77 aa)) the chain is on the cytoplasmic side. The chain crosses the membrane as a helical span at residues 78–98 (FWRFMFYGILLYLGEVTKAVQ). Residues 81–365 (FMFYGILLYL…WAVQTWYDSL (285 aa)) enclose the ABC transmembrane type-1 1 domain. Over 99-122 (PLLLGRIIASYDPDNKEERSIAIY) the chain is Extracellular. The chain crosses the membrane as a helical span at residues 123 to 146 (LGIGLCLLFIVRTLLLHPAIFGLH). Topologically, residues 147–195 (HIGMQMRIAMFSLIYKKTLKLSSRVLDKISIGQLVSLLSNNLNKFDEGL) are cytoplasmic. Residues 196-216 (ALAHFVWIVPLQVALLMGLIW) form a helical membrane-spanning segment. At 217-222 (ELLQAS) the chain is on the extracellular side. The helical transmembrane segment at 223–243 (AFCGLGFLIVLALFQAGLGRM) threads the bilayer. Residues 244–298 (MMKYRDQRAGKINERLVITSEMIENIQSVKAYCWEEAMEKMIENLRQTELKLTRK) are Cytoplasmic-facing. The chain crosses the membrane as a helical span at residues 299-319 (AAYVRYFNSSAFFFSGFFVVF). The Extracellular segment spans residues 320 to 339 (LSVLPYALIKGIVLRKIFTT). A helical membrane pass occupies residues 340-358 (ISFCIVLRMAVTRQFPWAV). Residues 359 to 858 (QTWYDSLGAI…YLRYITVHKS (500 aa)) are Cytoplasmic-facing. ATP-binding positions include W401, S434, 458 to 465 (GSTGAGKT), and Q493. Positions 423–646 (NDDDSLFFSN…RPDFSSKLMG (224 aa)) constitute an ABC transporter 1 domain. Residue C524 is the site of S-palmitoyl cysteine attachment. 2 positions are modified to phosphoserine: S549 and S660. The tract at residues 654–831 (SAERRNSILT…EEINEEDLKE (178 aa)) is disordered R region. At S670 the chain carries Phosphoserine; by PKA. At S686 the chain carries Phosphoserine. A Glycyl lysine isopeptide (Lys-Gly) (interchain with G-Cter in ubiquitin) cross-link involves residue K688. Residues S700 and S712 each carry the phosphoserine modification. T717 carries the post-translational modification Phosphothreonine. A phosphoserine mark is found at S737, S753, S768, S790, S795, and S813. A helical membrane pass occupies residues 859–879 (LIFVLIWCLVIFLAEVAASLV). The ABC transmembrane type-1 2 domain maps to 859–1155 (LIFVLIWCLV…AVNSSIDVDS (297 aa)). Over 880–918 (VLWFLGNTPPQDKGNSTYSRNNSYAVIITRTSSYYVFYI) the chain is Extracellular. N-linked (GlcNAc...) asparagine glycans are attached at residues N894 and N900. A discontinuously helical transmembrane segment spans residues 919 to 939 (YVGVADTLLAMGFFRGLPLVH). Residues 940–990 (TLITVSKILHHKMLHSVLQAPMSTLNTLKAGGILNRFSKDIAILDDLLPLT) are Cytoplasmic-facing. Residues 991 to 1011 (IFDFIQLLLIVIGAIAVVAVL) form a helical membrane-spanning segment. The Extracellular segment spans residues 1012–1013 (QP). The chain crosses the membrane as a helical span at residues 1014–1034 (YIFVATVPVIVAFIMLRAYFL). Over 1035–1095 (QTSQQLKQLE…TANWFLYLST (61 aa)) the chain is Cytoplasmic. Residues 1096–1116 (LRWFQMRIEMIFVIFFIAVTF) form a helical membrane-spanning segment. At 1117 to 1130 (ISILTTGEGEGTVG) the chain is on the extracellular side. A helical transmembrane segment spans residues 1131–1151 (IILTLAMNIMSTLQWAVNSSI). Topologically, residues 1152–1481 (DVDSLMRSVS…TEEEVQDTRL (330 aa)) are cytoplasmic. The ABC transporter 2 domain maps to 1211–1444 (MTVKDLTAKY…RSLFRQAISP (234 aa)). Residues Y1220 and 1245 to 1252 (GRTGSGKS) contribute to the ATP site. Residues 1387–1481 (RTLKQAFADC…TEEEVQDTRL (95 aa)) are interaction with GORASP2. A lipid anchor (S-palmitoyl cysteine) is attached at C1396. A phosphoserine mark is found at S1445 and S1457. The segment at 1462–1481 (QPQIAALKEETEEEVQDTRL) is disordered. Acidic residues predominate over residues 1471–1481 (ETEEEVQDTRL). The short motif at 1479-1481 (TRL) is the PDZ-binding element.

Belongs to the ABC transporter superfamily. ABCC family. CFTR transporter (TC 3.A.1.202) subfamily. In terms of assembly, monomer; does not require oligomerization for channel activity. May form oligomers in the membrane. Interacts with SLC26A3, SLC26A6 and NHERF1. Interacts with SHANK2. Interacts with MYO6. Interacts (via C-terminus) with GOPC (via PDZ domain); this promotes CFTR internalization and thereby decreases channel activity. Interacts with SLC4A7 through NHERF1. Found in a complex with MYO5B and RAB11A. Interacts with ANO1. Interacts with SLC26A8. Interacts with AHCYL1; the interaction increases CFTR activity. Interacts with CSE1L. The core-glycosylated form interacts with GORASP2 (via PDZ GRASP-type 1 domain) in respone to ER stress. Interacts with MARCHF2; the interaction leads to CFTR ubiqtuitination and degradation. Interacts with ADGRG2. N-glycosylated. In terms of processing, phosphorylated; cAMP treatment promotes phosphorylation and activates the channel. Dephosphorylation decreases the ATPase activity (in vitro). Phosphorylation at PKA sites activates the channel. Phosphorylation at PKC sites enhances the response to phosphorylation by PKA. Phosphorylated by AMPK; this inhibits channel activity. Post-translationally, ubiquitinated, leading to its degradation in the lysosome. Deubiquitination by USP10 in early endosomes enhances its endocytic recycling to the cell membrane. Ubiquitinated by RNF185 during ER stress. Ubiquitinated by MARCHF2.

The protein localises to the apical cell membrane. The protein resides in the early endosome membrane. It is found in the cell membrane. Its subcellular location is the recycling endosome membrane. It localises to the endoplasmic reticulum membrane. The protein localises to the nucleus. It catalyses the reaction ATP + H2O + closed Cl(-) channel = ADP + phosphate + open Cl(-) channel.. The catalysed reaction is chloride(in) = chloride(out). The enzyme catalyses hydrogencarbonate(in) = hydrogencarbonate(out). It carries out the reaction ATP + H2O = ADP + phosphate + H(+). Its function is as follows. Epithelial ion channel that plays an important role in the regulation of epithelial ion and water transport and fluid homeostasis. Mediates the transport of chloride ions across the cell membrane. Possesses an intrinsic ATPase activity and utilizes ATP to gate its channel; the passive flow of anions through the channel is gated by cycles of ATP binding and hydrolysis by the ATP-binding domains. The ion channel is also permeable to HCO(3)(-); selectivity depends on the extracellular chloride concentration. Exerts its function also by modulating the activity of other ion channels and transporters. Contributes to the regulation of the pH and the ion content of the epithelial fluid layer. Modulates the activity of the epithelial sodium channel (ENaC) complex, in part by regulating the cell surface expression of the ENaC complex. May regulate bicarbonate secretion and salvage in epithelial cells by regulating the transporter SLC4A7. Can inhibit the chloride channel activity of ANO1. Plays a role in the chloride and bicarbonate homeostasis during sperm epididymal maturation and capacitation. In Papio anubis (Olive baboon), this protein is Cystic fibrosis transmembrane conductance regulator.